Reading from the N-terminus, the 95-residue chain is Large ribosomal subunit protein bL27 (95 aa).

The interval 1–21 (MAHKKGASSSRNGRDSNAQRL) is disordered. The span at 7–19 (ASSSRNGRDSNAQ) shows a compositional bias: polar residues.

The protein belongs to the bacterial ribosomal protein bL27 family.

The protein is Large ribosomal subunit protein bL27 of Parafrankia sp. (strain EAN1pec).